A 346-amino-acid chain; its full sequence is tRNA N6-adenosine threonylcarbamoyltransferase (346 aa).

Fe cation contacts are provided by histidine 111 and histidine 115. Substrate contacts are provided by residues leucine 134–glycine 138, aspartate 167, glycine 180, aspartate 184, and asparagine 279. Aspartate 307 provides a ligand contact to Fe cation.

This sequence belongs to the KAE1 / TsaD family. The cofactor is Fe(2+).

The protein resides in the cytoplasm. It carries out the reaction L-threonylcarbamoyladenylate + adenosine(37) in tRNA = N(6)-L-threonylcarbamoyladenosine(37) in tRNA + AMP + H(+). Functionally, required for the formation of a threonylcarbamoyl group on adenosine at position 37 (t(6)A37) in tRNAs that read codons beginning with adenine. Is involved in the transfer of the threonylcarbamoyl moiety of threonylcarbamoyl-AMP (TC-AMP) to the N6 group of A37, together with TsaE and TsaB. TsaD likely plays a direct catalytic role in this reaction. This is tRNA N6-adenosine threonylcarbamoyltransferase from Nostoc sp. (strain PCC 7120 / SAG 25.82 / UTEX 2576).